The primary structure comprises 354 residues: Lipoyl synthase, mitochondrial (354 aa).

[4Fe-4S] cluster is bound by residues C91, C96, C102, C122, C126, C129, and S337. Residues 107-326 enclose the Radical SAM core domain; the sequence is DDSLATATIM…AEYSKKLGFL (220 aa).

This sequence belongs to the radical SAM superfamily. Lipoyl synthase family. It depends on [4Fe-4S] cluster as a cofactor.

The protein localises to the mitochondrion. The enzyme catalyses [[Fe-S] cluster scaffold protein carrying a second [4Fe-4S](2+) cluster] + N(6)-octanoyl-L-lysyl-[protein] + 2 oxidized [2Fe-2S]-[ferredoxin] + 2 S-adenosyl-L-methionine + 4 H(+) = [[Fe-S] cluster scaffold protein] + N(6)-[(R)-dihydrolipoyl]-L-lysyl-[protein] + 4 Fe(3+) + 2 hydrogen sulfide + 2 5'-deoxyadenosine + 2 L-methionine + 2 reduced [2Fe-2S]-[ferredoxin]. It participates in protein modification; protein lipoylation via endogenous pathway; protein N(6)-(lipoyl)lysine from octanoyl-[acyl-carrier-protein]: step 2/2. Its function is as follows. Catalyzes the radical-mediated insertion of two sulfur atoms into the C-6 and C-8 positions of the octanoyl moiety bound to the lipoyl domains of lipoate-dependent enzymes, thereby converting the octanoylated domains into lipoylated derivatives. The protein is Lipoyl synthase, mitochondrial of Caenorhabditis elegans.